We begin with the raw amino-acid sequence, 323 residues long: Pantothenate kinase (323 aa).

Position 101–108 (101–108 (GSVAVGKS)) interacts with ATP.

This sequence belongs to the prokaryotic pantothenate kinase family.

It localises to the cytoplasm. It catalyses the reaction (R)-pantothenate + ATP = (R)-4'-phosphopantothenate + ADP + H(+). It participates in cofactor biosynthesis; coenzyme A biosynthesis; CoA from (R)-pantothenate: step 1/5. The protein is Pantothenate kinase of Paenarthrobacter aurescens (strain TC1).